Here is an 894-residue protein sequence, read N- to C-terminus: Kinesin-like protein KIN-UB (894 aa).

Residues 1–53 form a disordered region; that stretch reads MAMASSRNGAVRGSMRPVSGANSSNLRSSSFKSRIPSSAPAPRRSSSASIGAA. The span at 19-50 shows a compositional bias: low complexity; sequence SGANSSNLRSSSFKSRIPSSAPAPRRSSSASI. The region spanning 60-402 is the Kinesin motor domain; that stretch reads RVRVAVRLRP…ILFGQRAMKV (343 aa). Position 145-152 (145-152) interacts with ATP; sequence GQTGTGKT. A D-BOX motif is present at residues 372-380; that stretch reads RTSLIVTIG. Residues 423 to 588 adopt a coiled-coil conformation; the sequence is VQLDKVIAEN…RSQLVQLTFE (166 aa). Disordered stretches follow at residues 530-550 and 598-623; these read EEEVSKVKSQSTLKTRSGEGE and RGAPGNSYSGTDSLPSRHSQARESVN. A compositionally biased stretch (polar residues) spans 603–623; it reads NSYSGTDSLPSRHSQARESVN. ARM repeat units follow at residues 626-665, 667-707, 709-749, and 751-790; these read KAPFATLCEQVGLQKILQLLESDDANIRIHAVKVVANLAA, EANQ…NLAM, EVSQ…NLCG, and DKLQARLWSDGGIKALLGMVRCGHPDVLAQVARGIANFAK.

It belongs to the TRAFAC class myosin-kinesin ATPase superfamily. Kinesin family. Ungrouped subfamily. Interacts (via C-terminus) with NEK5. As to expression, expressed in the basal regions and petioles of immature leaves and in the root elongation zone.

The protein resides in the cytoplasm. It localises to the cytoskeleton. In terms of biological role, involved in the control of epidermal-cell morphogenesis in roots and helical growth of roots by promoting microtubule depolymerization and limiting the accumulation of endoplasmic microtubules. Seems to be involved in the control of cell-file rotation (or twisting). The protein is Kinesin-like protein KIN-UB of Arabidopsis thaliana (Mouse-ear cress).